The sequence spans 303 residues: tRNA dimethylallyltransferase (303 aa).

10-17 (GPTASGKS) is an ATP binding site. Residue 12–17 (TASGKS) coordinates substrate. Residues 35-38 (DSMQ) are interaction with substrate tRNA.

Belongs to the IPP transferase family. Monomer. It depends on Mg(2+) as a cofactor.

The catalysed reaction is adenosine(37) in tRNA + dimethylallyl diphosphate = N(6)-dimethylallyladenosine(37) in tRNA + diphosphate. Catalyzes the transfer of a dimethylallyl group onto the adenine at position 37 in tRNAs that read codons beginning with uridine, leading to the formation of N6-(dimethylallyl)adenosine (i(6)A). The chain is tRNA dimethylallyltransferase from Methylobacterium nodulans (strain LMG 21967 / CNCM I-2342 / ORS 2060).